The following is a 133-amino-acid chain: MPPKTRGAVRKPRKKDKKNIALGQAHIKSTFNNTIVTITDPAGAVIAWASSGEVGFKGSRKSTPFAAQLAAEQAAKRAQEHGVRKVDVFVKGPGSGRETAIRSLTAAGLEVGSIQDVTPSAHNGCRPPKRRRV.

Residues 1-22 (MPPKTRGAVRKPRKKDKKNIAL) are disordered. The segment covering 7 to 17 (GAVRKPRKKDK) has biased composition (basic residues).

Belongs to the universal ribosomal protein uS11 family. As to quaternary structure, part of the 30S ribosomal subunit. Interacts with proteins S7 and S18. Binds to IF-3.

Functionally, located on the platform of the 30S subunit, it bridges several disparate RNA helices of the 16S rRNA. Forms part of the Shine-Dalgarno cleft in the 70S ribosome. In Renibacterium salmoninarum (strain ATCC 33209 / DSM 20767 / JCM 11484 / NBRC 15589 / NCIMB 2235), this protein is Small ribosomal subunit protein uS11.